Consider the following 160-residue polypeptide: Transcriptional repressor NrdR (160 aa).

Residues 3–34 (CPRCHHNNSRVIDSRQADDGRAIRRRRECENC) fold into a zinc finger. An ATP-cone domain is found at 49–139 (LLVIKKNGDR…VYRQFKDMSV (91 aa)).

Belongs to the NrdR family. The cofactor is Zn(2+).

Its function is as follows. Negatively regulates transcription of bacterial ribonucleotide reductase nrd genes and operons by binding to NrdR-boxes. In Enterococcus faecalis (strain ATCC 700802 / V583), this protein is Transcriptional repressor NrdR.